The following is a 211-amino-acid chain: Putative ATP-dependent Clp protease proteolytic subunit-like (211 aa).

The interval 1 to 24 (MTRPSARHVLPEFTERTSAGTRTS) is disordered. Histidine 129 is a catalytic residue.

Belongs to the peptidase S14 family.

Has lost one of the conserved residue (Ser) proposed to be part of the active site. Therefore it could be inactive. In Streptomyces coelicolor (strain ATCC BAA-471 / A3(2) / M145), this protein is Putative ATP-dependent Clp protease proteolytic subunit-like.